The sequence spans 71 residues: MNYYRKRLSPLPPNQPIDYKDTELLRKFITERGKILPRRITGLTAKQQRDLTTAVKRSRLVALLPFVNKEI.

It belongs to the bacterial ribosomal protein bS18 family. In terms of assembly, part of the 30S ribosomal subunit. Forms a tight heterodimer with protein bS6.

Functionally, binds as a heterodimer with protein bS6 to the central domain of the 16S rRNA, where it helps stabilize the platform of the 30S subunit. The protein is Small ribosomal subunit protein bS18 of Synechocystis sp. (strain ATCC 27184 / PCC 6803 / Kazusa).